Here is a 360-residue protein sequence, read N- to C-terminus: Coiled-coil domain-containing protein 86 (360 aa).

Residues 1 to 12 (MDTPLRRSRRLG) show a composition bias toward basic residues. Disordered stretches follow at residues 1 to 314 (MDTP…ENER) and 328 to 360 (LKRA…AAKI). 5 positions are modified to phosphoserine: Ser-21, Ser-24, Ser-47, Ser-50, and Ser-58. Residue Thr-65 is modified to Phosphothreonine. Residues Ser-66, Ser-69, Ser-80, Ser-91, Ser-102, Ser-110, Ser-113, and Ser-128 each carry the phosphoserine modification. A compositionally biased stretch (polar residues) spans 66–83 (SPGSPRLQQGSGLESPQG). The span at 153 to 164 (QLPPVPGSPEPY) shows a compositional bias: pro residues. A phosphoserine mark is found at Ser-188, Ser-217, and Ser-218. Residues 238 to 254 (GKPKSGRVWKDRSKKRF) show a composition bias toward basic residues. The stretch at 272 to 323 (KERQERKLAKDFARHLEEEKERRRQEKKQRRAENLKRRLENERKAEVVQVIR) forms a coiled coil. 2 stretches are compositionally biased toward basic and acidic residues: residues 273–295 (ERQE…ERRR) and 302–314 (RAEN…ENER). Arg-342 carries the citrulline modification.

Citrullinated by PADI4.

It localises to the nucleus. It is found in the chromosome. Its subcellular location is the nucleolus. In terms of biological role, required for proper chromosome segregation during mitosis and error-free mitotic progression. In Pongo abelii (Sumatran orangutan), this protein is Coiled-coil domain-containing protein 86.